Here is a 128-residue protein sequence, read N- to C-terminus: Adrenodoxin homolog (128 aa).

The 2Fe-2S ferredoxin-type domain maps to 12–115; it reads EQIRIFFKTM…NAVFTVPRAT (104 aa). 4 residues coordinate [2Fe-2S] cluster: C50, C56, C59, and C96.

Belongs to the adrenodoxin/putidaredoxin family. It depends on [2Fe-2S] cluster as a cofactor.

The protein localises to the mitosome. Its function is as follows. Ferredoxins are iron-sulfur proteins that transfer electrons in a wide variety of metabolic reactions. This Encephalitozoon cuniculi (strain GB-M1) (Microsporidian parasite) protein is Adrenodoxin homolog.